The primary structure comprises 277 residues: Formamidopyrimidine-DNA glycosylase (277 aa).

The active-site Schiff-base intermediate with DNA is the Pro2. Glu3 (proton donor) is an active-site residue. The active-site Proton donor; for beta-elimination activity is Lys60. DNA-binding residues include His94, Arg113, and Arg156. An FPG-type zinc finger spans residues 241 to 275 (KVYNREGLPCPHCGKPIQRIKVAGRSSYYCSSCQK). Catalysis depends on Arg265, which acts as the Proton donor; for delta-elimination activity.

It belongs to the FPG family. In terms of assembly, monomer. Zn(2+) serves as cofactor.

The enzyme catalyses Hydrolysis of DNA containing ring-opened 7-methylguanine residues, releasing 2,6-diamino-4-hydroxy-5-(N-methyl)formamidopyrimidine.. The catalysed reaction is 2'-deoxyribonucleotide-(2'-deoxyribose 5'-phosphate)-2'-deoxyribonucleotide-DNA = a 3'-end 2'-deoxyribonucleotide-(2,3-dehydro-2,3-deoxyribose 5'-phosphate)-DNA + a 5'-end 5'-phospho-2'-deoxyribonucleoside-DNA + H(+). Its function is as follows. Involved in base excision repair of DNA damaged by oxidation or by mutagenic agents. Acts as a DNA glycosylase that recognizes and removes damaged bases. Has a preference for oxidized purines, such as 7,8-dihydro-8-oxoguanine (8-oxoG). Has AP (apurinic/apyrimidinic) lyase activity and introduces nicks in the DNA strand. Cleaves the DNA backbone by beta-delta elimination to generate a single-strand break at the site of the removed base with both 3'- and 5'-phosphates. This chain is Formamidopyrimidine-DNA glycosylase, found in Desulforamulus reducens (strain ATCC BAA-1160 / DSM 100696 / MI-1) (Desulfotomaculum reducens).